Here is a 209-residue protein sequence, read N- to C-terminus: Ras-related protein Rab-2-A (209 aa).

13 to 21 is a GTP binding site; sequence GDTGVGKSC. The Effector region signature appears at 35–43; sequence HDLTIGVEF. Residues 61–65, 119–122, and 149–151 contribute to the GTP site; these read DTAGQ, NKCD, and SAK. Residues C207 and C208 are each lipidated (S-geranylgeranyl cysteine).

The protein belongs to the small GTPase superfamily. Rab family.

Its subcellular location is the endoplasmic reticulum membrane. It localises to the golgi apparatus membrane. Its function is as follows. Protein transport. Probably involved in vesicular traffic. This chain is Ras-related protein Rab-2-A (RAB2A), found in Zea mays (Maize).